The sequence spans 395 residues: Dihydrolipoyllysine-residue succinyltransferase component of 2-oxoglutarate dehydrogenase complex (395 aa).

Residues 2–77 (RVKIIVPSLG…AVGEEIGEIN (76 aa)) enclose the Lipoyl-binding domain. At lysine 43 the chain carries N6-lipoyllysine. One can recognise a Peripheral subunit-binding (PSBD) domain in the interval 111 to 148 (TLAPSVQKLVTENKLDPNNIKGTGRDGRITKGDVLATI). Residues histidine 366 and aspartate 370 contribute to the active site.

The protein belongs to the 2-oxoacid dehydrogenase family. In terms of assembly, forms a 24-polypeptide structural core with octahedral symmetry. Part of the 2-oxoglutarate dehydrogenase (OGDH) complex composed of E1 (2-oxoglutarate dehydrogenase), E2 (dihydrolipoamide succinyltransferase) and E3 (dihydrolipoamide dehydrogenase); the complex contains multiple copies of the three enzymatic components (E1, E2 and E3). It depends on (R)-lipoate as a cofactor.

The enzyme catalyses N(6)-[(R)-dihydrolipoyl]-L-lysyl-[protein] + succinyl-CoA = N(6)-[(R)-S(8)-succinyldihydrolipoyl]-L-lysyl-[protein] + CoA. It functions in the pathway amino-acid degradation; L-lysine degradation via saccharopine pathway; glutaryl-CoA from L-lysine: step 6/6. In terms of biological role, E2 component of the 2-oxoglutarate dehydrogenase (OGDH) complex which catalyzes the second step in the conversion of 2-oxoglutarate to succinyl-CoA and CO(2). The sequence is that of Dihydrolipoyllysine-residue succinyltransferase component of 2-oxoglutarate dehydrogenase complex (sucB) from Rickettsia conorii (strain ATCC VR-613 / Malish 7).